Here is a 563-residue protein sequence, read N- to C-terminus: Arginine--tRNA ligase (563 aa).

The 'HIGH' region signature appears at 121 to 131 (PNIAKPFSIGH).

This sequence belongs to the class-I aminoacyl-tRNA synthetase family. In terms of assembly, monomer.

The protein localises to the cytoplasm. It carries out the reaction tRNA(Arg) + L-arginine + ATP = L-arginyl-tRNA(Arg) + AMP + diphosphate. The protein is Arginine--tRNA ligase of Streptococcus pyogenes serotype M2 (strain MGAS10270).